Here is a 140-residue protein sequence, read N- to C-terminus: Regulator of ribonuclease activity B (140 aa).

The tract at residues 115 to 140 (FEDPNAQDDDEDDGEAIDEDDNGIRH) is disordered. Residues 119 to 140 (NAQDDDEDDGEAIDEDDNGIRH) show a composition bias toward acidic residues.

The protein belongs to the RraB family. In terms of assembly, interacts with the C-terminal region of Rne.

It localises to the cytoplasm. Globally modulates RNA abundance by binding to RNase E (Rne) and regulating its endonucleolytic activity. Can modulate Rne action in a substrate-dependent manner by altering the composition of the degradosome. The protein is Regulator of ribonuclease activity B of Pantoea ananatis (strain LMG 20103).